Consider the following 396-residue polypeptide: Elongation factor Tu (396 aa).

A tr-type G domain is found at 10–206; that stretch reads KPHVNIGTIG…AVDESVPEPV (197 aa). Residues 19–26 form a G1 region; sequence GHVDHGKT. 19–26 lines the GTP pocket; the sequence is GHVDHGKT. Residue Thr26 participates in Mg(2+) binding. The interval 62 to 66 is G2; it reads GITIN. The G3 stretch occupies residues 83 to 86; that stretch reads DAPG. Residues 83–87 and 138–141 contribute to the GTP site; these read DAPGH and NKSD. The G4 stretch occupies residues 138–141; it reads NKSD. The tract at residues 176–178 is G5; sequence SGL.

It belongs to the TRAFAC class translation factor GTPase superfamily. Classic translation factor GTPase family. EF-Tu/EF-1A subfamily. Monomer.

It localises to the cytoplasm. The catalysed reaction is GTP + H2O = GDP + phosphate + H(+). In terms of biological role, GTP hydrolase that promotes the GTP-dependent binding of aminoacyl-tRNA to the A-site of ribosomes during protein biosynthesis. The polypeptide is Elongation factor Tu (Beutenbergia cavernae (strain ATCC BAA-8 / DSM 12333 / CCUG 43141 / JCM 11478 / NBRC 16432 / NCIMB 13614 / HKI 0122)).